Reading from the N-terminus, the 93-residue chain is Cell division protein CrgA (93 aa).

The next 2 helical transmembrane spans lie at 31–51 (VWFV…LMVF) and 70–90 (LGPW…LLTM).

The protein belongs to the CrgA family.

The protein resides in the cell membrane. In terms of biological role, involved in cell division. This Mycobacterium avium (strain 104) protein is Cell division protein CrgA.